Reading from the N-terminus, the 417-residue chain is UPF0754 membrane protein PCC8801_0398 (417 aa).

Transmembrane regions (helical) follow at residues 11–31 (FSLLWTIALPPIAGTIIGYFT) and 395–415 (IVNIGGVLGFLVGVFQSILLI).

This sequence belongs to the UPF0754 family.

It is found in the cell inner membrane. The polypeptide is UPF0754 membrane protein PCC8801_0398 (Rippkaea orientalis (strain PCC 8801 / RF-1) (Cyanothece sp. (strain PCC 8801))).